Here is a 494-residue protein sequence, read N- to C-terminus: UPF0371 protein spr0309 (494 aa).

It belongs to the UPF0371 family.

The polypeptide is UPF0371 protein spr0309 (Streptococcus pneumoniae (strain ATCC BAA-255 / R6)).